We begin with the raw amino-acid sequence, 194 residues long: uncharacterized protein (194 aa).

An N-terminal signal peptide occupies residues 1–20; the sequence is MLYKFTVLLLIYSYLRNLQA. Asn-31, Asn-72, Asn-133, and Asn-157 each carry an N-linked (GlcNAc...) asparagine; by host glycan.

This is an uncharacterized protein from Ostreid herpesvirus 1 (isolate France) (OsHV-1).